A 192-amino-acid chain; its full sequence is Glycerol-3-phosphate acyltransferase (192 aa).

5 helical membrane-spanning segments follow: residues 4-24 (MFWL…AILL), 54-74 (LAIL…LIAS), 80-100 (IAQQ…PVYF), 112-132 (AGVL…AWLL), and 154-174 (LLAW…LLIV).

This sequence belongs to the PlsY family. In terms of assembly, probably interacts with PlsX.

Its subcellular location is the cell inner membrane. It catalyses the reaction an acyl phosphate + sn-glycerol 3-phosphate = a 1-acyl-sn-glycero-3-phosphate + phosphate. Its pathway is lipid metabolism; phospholipid metabolism. Catalyzes the transfer of an acyl group from acyl-phosphate (acyl-PO(4)) to glycerol-3-phosphate (G3P) to form lysophosphatidic acid (LPA). This enzyme utilizes acyl-phosphate as fatty acyl donor, but not acyl-CoA or acyl-ACP. In Pseudomonas syringae pv. syringae (strain B728a), this protein is Glycerol-3-phosphate acyltransferase.